Consider the following 105-residue polypeptide: Large ribosomal subunit protein uL24 (105 aa).

A disordered region spans residues 75–105 (DSDGNPTRVGYRTDEESGKRVRISRKNGKDI). The segment covering 94-105 (RVRISRKNGKDI) has biased composition (basic residues).

This sequence belongs to the universal ribosomal protein uL24 family. As to quaternary structure, part of the 50S ribosomal subunit.

Its function is as follows. One of two assembly initiator proteins, it binds directly to the 5'-end of the 23S rRNA, where it nucleates assembly of the 50S subunit. Functionally, one of the proteins that surrounds the polypeptide exit tunnel on the outside of the subunit. This is Large ribosomal subunit protein uL24 from Rhodococcus jostii (strain RHA1).